Here is a 288-residue protein sequence, read N- to C-terminus: 4-hydroxybenzoate octaprenyltransferase (288 aa).

The next 6 helical transmembrane spans lie at 20–40 (IGTL…AGGL), 43–63 (LKVF…GCII), 96–116 (LFVV…PLVV), 210–230 (QIIG…GMVA), 234–254 (AIYA…QKLI), and 262–282 (CFTA…ALML).

Belongs to the UbiA prenyltransferase family. Mg(2+) is required as a cofactor.

It is found in the cell inner membrane. It catalyses the reaction all-trans-octaprenyl diphosphate + 4-hydroxybenzoate = 4-hydroxy-3-(all-trans-octaprenyl)benzoate + diphosphate. The protein operates within cofactor biosynthesis; ubiquinone biosynthesis. Catalyzes the prenylation of para-hydroxybenzoate (PHB) with an all-trans polyprenyl group. Mediates the second step in the final reaction sequence of ubiquinone-8 (UQ-8) biosynthesis, which is the condensation of the polyisoprenoid side chain with PHB, generating the first membrane-bound Q intermediate 3-octaprenyl-4-hydroxybenzoate. This is 4-hydroxybenzoate octaprenyltransferase from Shewanella pealeana (strain ATCC 700345 / ANG-SQ1).